The primary structure comprises 452 residues: Bifunctional protein GlmU (452 aa).

The interval 1–233 is pyrophosphorylase; sequence MTDRPFAALI…AWEVAGVNSR (233 aa). UDP-N-acetyl-alpha-D-glucosamine is bound by residues 11 to 14, lysine 25, glutamine 76, 81 to 82, 104 to 106, glycine 144, glutamate 159, asparagine 174, and asparagine 231; these read LAAG, GT, and YGD. Aspartate 106 is a Mg(2+) binding site. Asparagine 231 contributes to the Mg(2+) binding site. The interval 234–254 is linker; the sequence is AELAAVEAEWQRRRRLAAMAD. The N-acetyltransferase stretch occupies residues 255 to 452; the sequence is GATLIAPETV…AMKIKKAARK (198 aa). Arginine 320 and lysine 338 together coordinate UDP-N-acetyl-alpha-D-glucosamine. The Proton acceptor role is filled by histidine 350. Positions 353 and 364 each coordinate UDP-N-acetyl-alpha-D-glucosamine. Residues alanine 367, 373 to 374, serine 392, alanine 410, and arginine 427 contribute to the acetyl-CoA site; that span reads NY.

The protein in the N-terminal section; belongs to the N-acetylglucosamine-1-phosphate uridyltransferase family. It in the C-terminal section; belongs to the transferase hexapeptide repeat family. As to quaternary structure, homotrimer. It depends on Mg(2+) as a cofactor.

It localises to the cytoplasm. It carries out the reaction alpha-D-glucosamine 1-phosphate + acetyl-CoA = N-acetyl-alpha-D-glucosamine 1-phosphate + CoA + H(+). The catalysed reaction is N-acetyl-alpha-D-glucosamine 1-phosphate + UTP + H(+) = UDP-N-acetyl-alpha-D-glucosamine + diphosphate. It functions in the pathway nucleotide-sugar biosynthesis; UDP-N-acetyl-alpha-D-glucosamine biosynthesis; N-acetyl-alpha-D-glucosamine 1-phosphate from alpha-D-glucosamine 6-phosphate (route II): step 2/2. The protein operates within nucleotide-sugar biosynthesis; UDP-N-acetyl-alpha-D-glucosamine biosynthesis; UDP-N-acetyl-alpha-D-glucosamine from N-acetyl-alpha-D-glucosamine 1-phosphate: step 1/1. Its pathway is bacterial outer membrane biogenesis; LPS lipid A biosynthesis. Functionally, catalyzes the last two sequential reactions in the de novo biosynthetic pathway for UDP-N-acetylglucosamine (UDP-GlcNAc). The C-terminal domain catalyzes the transfer of acetyl group from acetyl coenzyme A to glucosamine-1-phosphate (GlcN-1-P) to produce N-acetylglucosamine-1-phosphate (GlcNAc-1-P), which is converted into UDP-GlcNAc by the transfer of uridine 5-monophosphate (from uridine 5-triphosphate), a reaction catalyzed by the N-terminal domain. This Rhizorhabdus wittichii (strain DSM 6014 / CCUG 31198 / JCM 15750 / NBRC 105917 / EY 4224 / RW1) (Sphingomonas wittichii) protein is Bifunctional protein GlmU.